The sequence spans 270 residues: Indole-3-glycerol phosphate synthase (270 aa).

The protein belongs to the TrpC family.

The catalysed reaction is 1-(2-carboxyphenylamino)-1-deoxy-D-ribulose 5-phosphate + H(+) = (1S,2R)-1-C-(indol-3-yl)glycerol 3-phosphate + CO2 + H2O. It participates in amino-acid biosynthesis; L-tryptophan biosynthesis; L-tryptophan from chorismate: step 4/5. This chain is Indole-3-glycerol phosphate synthase, found in Beutenbergia cavernae (strain ATCC BAA-8 / DSM 12333 / CCUG 43141 / JCM 11478 / NBRC 16432 / NCIMB 13614 / HKI 0122).